The sequence spans 164 residues: Shikimate kinase (164 aa).

An ATP-binding site is contributed by 10 to 15 (GVGKTT). A Mg(2+)-binding site is contributed by Thr14. Substrate is bound by residues Asp28, Arg52, and Gly75. Arg116 contributes to the ATP binding site. A substrate-binding site is contributed by Arg134. Arg151 provides a ligand contact to ATP.

It belongs to the shikimate kinase family. Monomer. It depends on Mg(2+) as a cofactor.

It localises to the cytoplasm. It carries out the reaction shikimate + ATP = 3-phosphoshikimate + ADP + H(+). It participates in metabolic intermediate biosynthesis; chorismate biosynthesis; chorismate from D-erythrose 4-phosphate and phosphoenolpyruvate: step 5/7. Functionally, catalyzes the specific phosphorylation of the 3-hydroxyl group of shikimic acid using ATP as a cosubstrate. The sequence is that of Shikimate kinase from Streptococcus equi subsp. zooepidemicus (strain MGCS10565).